The primary structure comprises 702 residues: Elongation factor G (702 aa).

In terms of domain architecture, tr-type G spans 8–286; the sequence is DKVRNIGIIA…AVVEYLPSPL (279 aa). Residues 17–24, 85–89, and 139–142 contribute to the GTP site; these read AHIDAGKT, DTPGH, and NKMD.

Belongs to the TRAFAC class translation factor GTPase superfamily. Classic translation factor GTPase family. EF-G/EF-2 subfamily.

It is found in the cytoplasm. Functionally, catalyzes the GTP-dependent ribosomal translocation step during translation elongation. During this step, the ribosome changes from the pre-translocational (PRE) to the post-translocational (POST) state as the newly formed A-site-bound peptidyl-tRNA and P-site-bound deacylated tRNA move to the P and E sites, respectively. Catalyzes the coordinated movement of the two tRNA molecules, the mRNA and conformational changes in the ribosome. This is Elongation factor G from Chloroflexus aurantiacus (strain ATCC 29366 / DSM 635 / J-10-fl).